A 407-amino-acid polypeptide reads, in one-letter code: Eukaryotic initiation factor 4A-II (407 aa).

The tract at residues 1 to 23 (MSGGSADYSRDHGGPEGMEPDGV) is disordered. The short motif at 33–61 (DNFDDMNLKESLLRGIYAYGFEKPSAIQQ) is the Q motif element. Residues 64 to 235 (IIPCIKGYDV…KKFMREPIRI (172 aa)) form the Helicase ATP-binding domain. Position 77–84 (77–84 (AQSGTGKT)) interacts with ATP. Positions 183–186 (DEAD) match the DEAD box motif. The Helicase C-terminal domain occupies 246–407 (GIKQFYINVE…EMPMNVADLI (162 aa)).

It belongs to the DEAD box helicase family. eIF4A subfamily. In terms of assembly, eIF4F is a multi-subunit complex, the composition of which varies with external and internal environmental conditions. It is composed of at least EIF4A, EIF4E and EIF4G1/EIFFG3. Interacts with EIF4E.

The catalysed reaction is ATP + H2O = ADP + phosphate + H(+). Its function is as follows. ATP-dependent RNA helicase which is a subunit of the eIF4F complex involved in cap recognition and is required for mRNA binding to ribosome. In the current model of translation initiation, eIF4A unwinds RNA secondary structures in the 5'-UTR of mRNAs which is necessary to allow efficient binding of the small ribosomal subunit, and subsequent scanning for the initiator codon. The polypeptide is Eukaryotic initiation factor 4A-II (EIF4A2) (Gallus gallus (Chicken)).